Here is a 198-residue protein sequence, read N- to C-terminus: Recombination protein RecR (198 aa).

A C4-type zinc finger spans residues 57–72; the sequence is CSVCGHITENDPCYIC. In terms of domain architecture, Toprim spans 80–175; that stretch reads SVICVVEDDK…KVTRLAQGLS (96 aa).

It belongs to the RecR family.

Functionally, may play a role in DNA repair. It seems to be involved in an RecBC-independent recombinational process of DNA repair. It may act with RecF and RecO. In Staphylococcus epidermidis (strain ATCC 35984 / DSM 28319 / BCRC 17069 / CCUG 31568 / BM 3577 / RP62A), this protein is Recombination protein RecR.